The primary structure comprises 283 residues: Ribonuclease P protein subunit p38 (283 aa).

Ala-2 carries the post-translational modification N-acetylalanine. Ser-12, Ser-226, and Ser-235 each carry phosphoserine.

This sequence belongs to the eukaryotic ribosomal protein eL8 family. In terms of assembly, component of nuclear RNase P and RNase MRP ribonucleoproteins. RNase P consists of a catalytic RNA moiety and about 10 protein subunits; POP1, POP4, POP5, POP7, RPP14, RPP21, RPP25, RPP30, RPP38 and RPP40. Within the RNase P complex, POP1, POP7 and RPP25 form the 'finger' subcomplex, POP5, RPP14, RPP40 and homodimeric RPP30 form the 'palm' subcomplex, and RPP21, POP4 and RPP38 form the 'wrist' subcomplex. All subunits of the RNase P complex interact with the catalytic RNA. Several subunits of RNase P are also part of the RNase MRP complex. RNase MRP consists of a catalytic RNA moiety and about 8 protein subunits; POP1, POP7, RPP25, RPP30, RPP38, RPP40 and possibly also POP4 and POP5.

Its subcellular location is the nucleus. The protein resides in the nucleolus. Functionally, component of ribonuclease P, a ribonucleoprotein complex that generates mature tRNA molecules by cleaving their 5'-ends. Also a component of the MRP ribonuclease complex, which cleaves pre-rRNA sequences. This is Ribonuclease P protein subunit p38 (RPP38) from Homo sapiens (Human).